Consider the following 57-residue polypeptide: Potassium channel toxin alpha-KTx 8.8 (57 aa).

The signal sequence occupies residues 1-19 (MCRLYAIILIVLVMNVIMT). Residues 20–28 (IIPDSKVEV) constitute a propeptide that is removed on maturation. 3 disulfide bridges follow: C31–C47, C34–C52, and C38–C54.

It belongs to the short scorpion toxin superfamily. Potassium channel inhibitor family. Alpha-KTx 08 subfamily. Post-translationally, contains 3 disulfide bonds. Expressed by the venom gland.

Its subcellular location is the secreted. Selectively inhibits voltage-gated potassium channels rKv1.2/KCNA2 (IC(50)=331 nM) and hKv1.3/KCNA3 (IC(50)=503 nM). Partially inihibts rKv1.6/KCNA6 (IC(50)=9983 nM). The polypeptide is Potassium channel toxin alpha-KTx 8.8 (Orthochirus scrobiculosus (Central Asian scorpion)).